The sequence spans 103 residues: UPF0058 protein MJ1205 (103 aa).

It belongs to the UPF0058 family.

The sequence is that of UPF0058 protein MJ1205 from Methanocaldococcus jannaschii (strain ATCC 43067 / DSM 2661 / JAL-1 / JCM 10045 / NBRC 100440) (Methanococcus jannaschii).